The sequence spans 377 residues: N-acetyldiaminopimelate deacetylase (377 aa).

Asp70 is an active-site residue. Residue Glu129 is the Proton acceptor of the active site.

Belongs to the peptidase M20A family. N-acetyldiaminopimelate deacetylase subfamily.

The enzyme catalyses N-acetyl-(2S,6S)-2,6-diaminopimelate + H2O = (2S,6S)-2,6-diaminopimelate + acetate. It functions in the pathway amino-acid biosynthesis; L-lysine biosynthesis via DAP pathway; LL-2,6-diaminopimelate from (S)-tetrahydrodipicolinate (acetylase route): step 3/3. In terms of biological role, catalyzes the conversion of N-acetyl-diaminopimelate to diaminopimelate and acetate. The polypeptide is N-acetyldiaminopimelate deacetylase (Streptococcus thermophilus (strain ATCC BAA-491 / LMD-9)).